A 344-amino-acid chain; its full sequence is Methionine synthase (344 aa).

Residues H211, C213, E236, and C315 each coordinate Zn(2+).

Belongs to the archaeal MetE family. It depends on Zn(2+) as a cofactor.

It participates in amino-acid biosynthesis; L-methionine biosynthesis via de novo pathway. In terms of biological role, catalyzes the transfer of a methyl group to L-homocysteine resulting in methionine formation. The physiological methyl donor is unknown. In Thermoplasma volcanium (strain ATCC 51530 / DSM 4299 / JCM 9571 / NBRC 15438 / GSS1), this protein is Methionine synthase.